The chain runs to 145 residues: Ribosomal RNA large subunit methyltransferase H (145 aa).

S-adenosyl-L-methionine contacts are provided by residues L62, G94, and 113 to 118; that span reads LGQLTL.

This sequence belongs to the RNA methyltransferase RlmH family. In terms of assembly, homodimer.

Its subcellular location is the cytoplasm. It catalyses the reaction pseudouridine(1915) in 23S rRNA + S-adenosyl-L-methionine = N(3)-methylpseudouridine(1915) in 23S rRNA + S-adenosyl-L-homocysteine + H(+). Functionally, specifically methylates the pseudouridine at position 1915 (m3Psi1915) in 23S rRNA. In Deinococcus deserti (strain DSM 17065 / CIP 109153 / LMG 22923 / VCD115), this protein is Ribosomal RNA large subunit methyltransferase H.